A 373-amino-acid polypeptide reads, in one-letter code: Sterol-4-alpha-carboxylate 3-dehydrogenase, decarboxylating (373 aa).

The residue at position 1 (Met-1) is an N-acetylmethionine. Thr-22 carries the phosphothreonine modification. The active-site Proton acceptor is Tyr-172. NAD(+) is bound at residue Lys-176. A helical transmembrane segment spans residues 298 to 318 (WVAYYLALLLSLLVMVISPVI). Positions 370–373 (RRVK) match the Prevents secretion from ER motif.

Belongs to the 3-beta-HSD family. Homodimer. As to expression, brain, heart, liver, lung, kidney, skin and placenta.

The protein localises to the endoplasmic reticulum membrane. Its subcellular location is the lipid droplet. The enzyme catalyses a 3beta-hydroxysteroid-4alpha-carboxylate + NADP(+) = a 3-oxosteroid + CO2 + NADPH. The catalysed reaction is a 3beta-hydroxysteroid-4alpha-carboxylate + NAD(+) = a 3-oxosteroid + CO2 + NADH. It carries out the reaction 4alpha-carboxyzymosterol + NADP(+) = zymosterone + CO2 + NADPH. It catalyses the reaction 4alpha-carboxy-4beta-methyl-5alpha-cholest-8-en-3beta-ol + NADP(+) = 4alpha-methyl-5alpha-cholest-8-en-3-one + CO2 + NADPH. The enzyme catalyses 4alpha-carboxy-5alpha-cholest-8-ene-3beta-ol + NADP(+) = 5alpha-cholest-8-en-3-one + CO2 + NADPH. The catalysed reaction is 4beta-methylzymosterol-4alpha-carboxylate + NADP(+) = 3-dehydro-4-methylzymosterol + CO2 + NADPH. It carries out the reaction 4beta-methylzymosterol-4alpha-carboxylate + NAD(+) = 3-dehydro-4-methylzymosterol + CO2 + NADH. It catalyses the reaction 4alpha-carboxy-5alpha-cholest-8-ene-3beta-ol + NAD(+) = 5alpha-cholest-8-en-3-one + CO2 + NADH. The enzyme catalyses 4alpha-carboxy-4beta-methyl-5alpha-cholest-8-en-3beta-ol + NAD(+) = 4alpha-methyl-5alpha-cholest-8-en-3-one + CO2 + NADH. The catalysed reaction is 4alpha-carboxyzymosterol + NAD(+) = zymosterone + CO2 + NADH. The protein operates within steroid biosynthesis; zymosterol biosynthesis; zymosterol from lanosterol: step 4/6. Catalyzes the NAD(P)(+)-dependent oxidative decarboxylation of the C4 methyl groups of 4-alpha-carboxysterols in post-squalene cholesterol biosynthesis. Also plays a role in the regulation of the endocytic trafficking of EGFR. In Homo sapiens (Human), this protein is Sterol-4-alpha-carboxylate 3-dehydrogenase, decarboxylating (NSDHL).